The sequence spans 198 residues: Pyridoxal 5'-phosphate synthase subunit PdxT (198 aa).

Residue Gly-52–Ser-54 coordinates L-glutamine. Cys-84 (nucleophile) is an active-site residue. L-glutamine is bound by residues Arg-116 and Ile-143–Arg-144. Active-site charge relay system residues include His-179 and Glu-181.

It belongs to the glutaminase PdxT/SNO family. In terms of assembly, in the presence of PdxS, forms a dodecamer of heterodimers. Only shows activity in the heterodimer.

It catalyses the reaction aldehydo-D-ribose 5-phosphate + D-glyceraldehyde 3-phosphate + L-glutamine = pyridoxal 5'-phosphate + L-glutamate + phosphate + 3 H2O + H(+). It carries out the reaction L-glutamine + H2O = L-glutamate + NH4(+). The protein operates within cofactor biosynthesis; pyridoxal 5'-phosphate biosynthesis. In terms of biological role, catalyzes the hydrolysis of glutamine to glutamate and ammonia as part of the biosynthesis of pyridoxal 5'-phosphate. The resulting ammonia molecule is channeled to the active site of PdxS. This chain is Pyridoxal 5'-phosphate synthase subunit PdxT, found in Caldivirga maquilingensis (strain ATCC 700844 / DSM 13496 / JCM 10307 / IC-167).